Reading from the N-terminus, the 798-residue chain is Cold shock domain-containing protein E1 (798 aa).

Residues 26–87 enclose the CSD 1 domain; it reads ETGVIEKLLT…RTGKPIAIKL (62 aa). Lys81 is modified (N6-acetyllysine). Residue Lys91 forms a Glycyl lysine isopeptide (Lys-Gly) (interchain with G-Cter in SUMO2) linkage. Residue Ser123 is modified to Phosphoserine. Positions 136–179 constitute a CSD 2; truncated domain; it reads VFYLTYTSEDVEGNVQLETGDKINFVIDNNKHTGAVSARNIMLL. The 60-residue stretch at 186–245 folds into the CSD 3 domain; sequence CQGVVCAMKEAFGFIERGDVVKEIFFHYSEFKGDLETLQPGDDVEFTIKDRNGKEVATDV. Phosphoserine is present on Ser276. One can recognise a CSD 4; truncated domain in the interval 297–337; the sequence is LPFGDKDTKSKVTLLEGDHVRFNISTDRRDKLERATNIEVL. 2 consecutive CSD domains span residues 349–410 and 447–507; these read EMGV…AIRI and NKGK…ATCV. Ser514 carries the phosphoserine modification. The region spanning 519–579 is the CSD 7 domain; that stretch reads LLGYVATLKD…KGNKVSAEKV (61 aa). Residue Ser584 is modified to Phosphoserine. 2 CSD domains span residues 610–670 and 674–735; these read PTQI…AYNI and RRAT…ACNV. One can recognise an SUZ-C domain in the interval 748-789; that stretch reads PRPDRLVNRLKNITLDDASAPRLMVLRQPRGPDNSMGFGAER. Residue Thr761 is modified to Phosphothreonine.

This sequence belongs to the UNR family. Component of a multi subunit autoregulatory ribonucleoprotein complex (ARC), at least composed of IGF2BP1, PABPC1 and CSDE1. Interacts with STRAP. Part of a complex associated with the FOS mCRD domain and consisting of PABPC1, PAIP1, HNRPD and SYNCRIP. The interaction with PABPC1 is direct and RNA-independent. Interacts with EIF4ENIF1/4E-T.

It localises to the cytoplasm. Its subcellular location is the stress granule. The protein resides in the P-body. In terms of biological role, RNA-binding protein involved in translationally coupled mRNA turnover. Implicated with other RNA-binding proteins in the cytoplasmic deadenylation/translational and decay interplay of the FOS mRNA mediated by the major coding-region determinant of instability (mCRD) domain. Required for efficient formation of stress granules. This chain is Cold shock domain-containing protein E1, found in Mus musculus (Mouse).